Consider the following 97-residue polypeptide: Large ribosomal subunit protein uL23 (97 aa).

This sequence belongs to the universal ribosomal protein uL23 family. Part of the 50S ribosomal subunit. Contacts protein L29, and trigger factor when it is bound to the ribosome.

In terms of biological role, one of the early assembly proteins it binds 23S rRNA. One of the proteins that surrounds the polypeptide exit tunnel on the outside of the ribosome. Forms the main docking site for trigger factor binding to the ribosome. This is Large ribosomal subunit protein uL23 from Bartonella henselae (strain ATCC 49882 / DSM 28221 / CCUG 30454 / Houston 1) (Rochalimaea henselae).